The chain runs to 361 residues: MAGNTIGQLFRVTTFGESHGLALGCIVDGVPPGIPLTEADLQHDLDRRRPGTSRYTTQRREPDQVKILSGVFDGVTTGTSIGLLIENTDQRSQDYSAIKDVFRPGHADYTYEQKYGLRDYRGGGRSSARETAMRVAAGAIAKKYLAEKFGIEIRGCLTQMGDIPLEIKDWRQVELNPFFCPDADKLDALDELMRALKKEGDSIGAKVTVVASGVPAGLGEPVFDRLDADIAHALMSINAVKGVEIGEGFNVVALRGSQNRDEITAQGFQSNHAGGILGGISSGQHIVAHMALKPTSSITVPGRTINRMGEEVEMITKGRHDPCVGIRAVPIAEAMLAIVLMDHLLRHRAQNADVKTEIPRW.

The NADP(+) site is built by Arg48 and Arg54. Residues 125–127 (RSS), 238–239 (NA), Gly278, 293–297 (KPTSS), and Arg319 each bind FMN.

The protein belongs to the chorismate synthase family. As to quaternary structure, homotetramer. The cofactor is FMNH2.

The catalysed reaction is 5-O-(1-carboxyvinyl)-3-phosphoshikimate = chorismate + phosphate. Its pathway is metabolic intermediate biosynthesis; chorismate biosynthesis; chorismate from D-erythrose 4-phosphate and phosphoenolpyruvate: step 7/7. Functionally, catalyzes the anti-1,4-elimination of the C-3 phosphate and the C-6 proR hydrogen from 5-enolpyruvylshikimate-3-phosphate (EPSP) to yield chorismate, which is the branch point compound that serves as the starting substrate for the three terminal pathways of aromatic amino acid biosynthesis. This reaction introduces a second double bond into the aromatic ring system. In Salmonella paratyphi A (strain ATCC 9150 / SARB42), this protein is Chorismate synthase.